The following is a 436-amino-acid chain: Xylose isomerase (436 aa).

Catalysis depends on residues H100 and D103. Mg(2+)-binding residues include E231, E267, H270, D295, D306, D308, and D338.

Belongs to the xylose isomerase family. Homotetramer. Mg(2+) serves as cofactor.

It is found in the cytoplasm. The catalysed reaction is alpha-D-xylose = alpha-D-xylulofuranose. This chain is Xylose isomerase, found in Rhizobium johnstonii (strain DSM 114642 / LMG 32736 / 3841) (Rhizobium leguminosarum bv. viciae).